The chain runs to 588 residues: Adenylate kinase 5, chloroplastic (588 aa).

A disordered region spans residues 1-34 (MASLSLSSAHFSSTSSSSRSSISTSSLSPSSTSL). A chloroplast-targeting transit peptide spans 1–73 (MASLSLSSAH…SFSTSNSQIR (73 aa)). 89 to 94 (ASGKGT) lines the ATP pocket. The NMP stretch occupies residues 109–138 (STGDLLRAEVSSGTDIGKRAKEFMNSGSLV). AMP contacts are provided by residues R115, 136–138 (SLV), 165–168 (GFPR), and Q172. The interval 202–235 (GRRLDPVTGKIYHIKNYPPESDEIKARLVTRPDD) is LID. ATP is bound at residue R203. Residues R232 and R243 each contribute to the AMP site.

It belongs to the adenylate kinase family. As to quaternary structure, monomer.

Its subcellular location is the plastid. It is found in the chloroplast. It catalyses the reaction AMP + ATP = 2 ADP. Functionally, catalyzes the reversible transfer of the terminal phosphate group between ATP and AMP. This is Adenylate kinase 5, chloroplastic from Arabidopsis thaliana (Mouse-ear cress).